The primary structure comprises 148 residues: Putative nickel-responsive regulator (148 aa).

4 residues coordinate Ni(2+): histidine 88, histidine 99, histidine 101, and cysteine 107.

It belongs to the transcriptional regulatory CopG/NikR family. Requires Ni(2+) as cofactor.

Its function is as follows. Transcriptional regulator. The sequence is that of Putative nickel-responsive regulator from Helicobacter pylori (strain HPAG1).